Reading from the N-terminus, the 233-residue chain is 4'-phosphopantetheinyl transferase psf-1 (233 aa).

Mg(2+) contacts are provided by D110, E112, and E154. The interval 161-192 (GKGISYGLSSFTARLSEDGQATLRLPDHEAPC) is peptidyl carrier protein binding.

This sequence belongs to the P-Pant transferase superfamily. Gsp/Sfp/HetI/AcpT family. Requires Mg(2+) as cofactor.

It carries out the reaction apo-[peptidyl-carrier protein] + CoA = holo-[peptidyl-carrier protein] + adenosine 3',5'-bisphosphate + H(+). Its function is as follows. Probably activates the peptidyl carrier protein (PCP) domains of surfactin synthetase by transferring the 4'-phosphopantetheinyl moiety of coenzyme A (CoA) to a serine residue. Required for the production of the lipopeptide antibiotic, surfactin. The chain is 4'-phosphopantetheinyl transferase psf-1 (psf-1) from Bacillus pumilus (Bacillus mesentericus).